A 131-amino-acid chain; its full sequence is Small ribosomal subunit protein uS11 (131 aa).

Belongs to the universal ribosomal protein uS11 family. In terms of assembly, part of the 30S ribosomal subunit. Interacts with proteins S7 and S18. Binds to IF-3.

Its function is as follows. Located on the platform of the 30S subunit, it bridges several disparate RNA helices of the 16S rRNA. Forms part of the Shine-Dalgarno cleft in the 70S ribosome. This is Small ribosomal subunit protein uS11 from Halorhodospira halophila (strain DSM 244 / SL1) (Ectothiorhodospira halophila (strain DSM 244 / SL1)).